Reading from the N-terminus, the 1203-residue chain is DNA-directed RNA polymerase subunit beta (1203 aa).

The segment covering A1174–A1195 has biased composition (basic and acidic residues). The tract at residues A1174 to E1203 is disordered.

It belongs to the RNA polymerase beta chain family. In terms of assembly, the RNAP catalytic core consists of 2 alpha, 1 beta, 1 beta' and 1 omega subunit. When a sigma factor is associated with the core the holoenzyme is formed, which can initiate transcription.

The enzyme catalyses RNA(n) + a ribonucleoside 5'-triphosphate = RNA(n+1) + diphosphate. Functionally, DNA-dependent RNA polymerase catalyzes the transcription of DNA into RNA using the four ribonucleoside triphosphates as substrates. This chain is DNA-directed RNA polymerase subunit beta, found in Streptococcus pneumoniae serotype 19F (strain G54).